The sequence spans 360 residues: Inward rectifier potassium channel 13 (360 aa).

The Cytoplasmic portion of the chain corresponds to 1–50 (MDSSNCKVIAPLLSQRYRRMVTKDGHSTLQMDGAQRGLAYLRDAWGILMD). The helical transmembrane segment at 51–77 (MRWRWMMLVFSASFVVHWLVFAVLWYV) threads the bilayer. Topologically, residues 78–105 (LAEMNGDLELDHDAPPENHTICVKYITS) are extracellular. An intramembrane region (helical; Pore-forming) is located at residues 106 to 122 (FTAAFSFSLETQLTIGY). The Selectivity filter motif lies at 119–124 (TIGYGT). Over 123–131 (GTMFPSGDC) the chain is Extracellular. The helical transmembrane segment at 132 to 157 (PSAIALLAIQMLLGLMLEAFITGAFV) threads the bilayer. Residues 158-360 (AKIARPKNRA…FQISETGLTE (203 aa)) lie on the Cytoplasmic side of the membrane. At Ser-201 the chain carries Phosphoserine; by PKC. A Phosphoserine; by PKA modification is found at Ser-287.

It belongs to the inward rectifier-type potassium channel (TC 1.A.2.1) family. KCNJ13 subfamily. Homotetramer. Interacts with RAB28; the interaction may facilitate cone outer segments phagocytosis. Post-translationally, phosphorylation at Ser-201 by PKC strongly inhibits ionic currents, while phosphorylation at Ser-287 by PKA increases them. In terms of tissue distribution, predominantly expressed in small intestine. Expression is also detected in stomach, kidney, and all central nervous system regions tested with the exception of spinal cord.

It is found in the membrane. It localises to the cell membrane. It catalyses the reaction K(+)(in) = K(+)(out). Its activity is regulated as follows. Inhibited by Ba(2+) and Cs(+), although sensitivity to those inhibitors is much lower than in other Kir channels. Functionally, inward rectifier potassium channels are characterized by a greater tendency to allow potassium to flow into the cell rather than out of it. Their voltage dependence is regulated by the concentration of extracellular potassium; as external potassium is raised, the voltage range of the channel opening shifts to more positive voltages. The inward rectification is mainly due to the blockage of outward current by internal magnesium. KCNJ13 has a very low single channel conductance, low sensitivity to block by external barium and cesium, and no dependence of its inward rectification properties on the internal blocking particle magnesium. This is Inward rectifier potassium channel 13 (KCNJ13) from Homo sapiens (Human).